Here is a 102-residue protein sequence, read N- to C-terminus: Colipase-like protein 2 (102 aa).

Residues 1-23 form the signal peptide; the sequence is MAFTQALVTVLALLAGTLPHRHS. Cystine bridges form between Cys36–Cys47, Cys42–Cys58, Cys46–Cys80, Cys68–Cys88, and Cys82–Cys99.

It belongs to the colipase family.

It localises to the secreted. The protein is Colipase-like protein 2 (Clpsl2) of Mus musculus (Mouse).